The primary structure comprises 301 residues: Hydroxymycolate synthase MmaA4 (301 aa).

S-adenosyl-L-methionine contacts are provided by residues 42 to 43 (YS), 81 to 83 (GCG), 103 to 108 (TLSKNQ), 132 to 133 (WE), and I145. The active site involves C278.

It belongs to the CFA/CMAS family. Monomer.

The protein operates within lipid metabolism; mycolic acid biosynthesis. In terms of biological role, involved in the biosynthesis of hydroxymycolate, a common precursor of oxygenated mycolic acids (methoxymycolate and ketomycolate). Probably transfers a methyl group from the S-adenosylmethionine (SAM) cofactor and, subsequently or simultaneously, a water molecule onto the double bound of ethylene substrates, leading to the formation of the hydroxylated product at the distal position. The protein is Hydroxymycolate synthase MmaA4 (cmaA) of Mycobacterium bovis (strain ATCC BAA-935 / AF2122/97).